The primary structure comprises 245 residues: Cell division protein ZapD (245 aa).

It belongs to the ZapD family. Interacts with FtsZ.

Its subcellular location is the cytoplasm. Functionally, cell division factor that enhances FtsZ-ring assembly. Directly interacts with FtsZ and promotes bundling of FtsZ protofilaments, with a reduction in FtsZ GTPase activity. This Photobacterium profundum (strain SS9) protein is Cell division protein ZapD.